The following is a 393-amino-acid chain: tRNA(Met) cytidine acetate ligase (393 aa).

ATP contacts are provided by G81, N142, and R167.

This sequence belongs to the TmcAL family.

It is found in the cytoplasm. It carries out the reaction cytidine(34) in elongator tRNA(Met) + acetate + ATP = N(4)-acetylcytidine(34) in elongator tRNA(Met) + AMP + diphosphate. Its function is as follows. Catalyzes the formation of N(4)-acetylcytidine (ac(4)C) at the wobble position of elongator tRNA(Met), using acetate and ATP as substrates. First activates an acetate ion to form acetyladenylate (Ac-AMP) and then transfers the acetyl group to tRNA to form ac(4)C34. This chain is tRNA(Met) cytidine acetate ligase, found in Bacillus cytotoxicus (strain DSM 22905 / CIP 110041 / 391-98 / NVH 391-98).